The sequence spans 487 residues: Glycogen synthase 1 (487 aa).

ADP-alpha-D-glucose is bound at residue lysine 15.

Belongs to the glycosyltransferase 1 family. Bacterial/plant glycogen synthase subfamily.

The catalysed reaction is [(1-&gt;4)-alpha-D-glucosyl](n) + ADP-alpha-D-glucose = [(1-&gt;4)-alpha-D-glucosyl](n+1) + ADP + H(+). The protein operates within glycan biosynthesis; glycogen biosynthesis. Synthesizes alpha-1,4-glucan chains using ADP-glucose. The polypeptide is Glycogen synthase 1 (Nitrosococcus oceani (strain ATCC 19707 / BCRC 17464 / JCM 30415 / NCIMB 11848 / C-107)).